The sequence spans 417 residues: Probable dihydrofolate synthetase (417 aa).

Residue 34 to 37 (GKGS) participates in ATP binding. 3 residues coordinate Mg(2+): Ser58, Glu123, and His151. Positions 274 and 289 each coordinate ATP.

Belongs to the folylpolyglutamate synthase family.

It catalyses the reaction 7,8-dihydropteroate + L-glutamate + ATP = 7,8-dihydrofolate + ADP + phosphate + H(+). The protein operates within cofactor biosynthesis; tetrahydrofolylpolyglutamate biosynthesis. In terms of biological role, glutamate-adding enzyme which catalyzes the binding of the first glutamyl side chain to dihydropteroate. Leads to the de nove synthesis of tetrahydrofolate. de novo. This is Probable dihydrofolate synthetase (fol3) from Schizosaccharomyces pombe (strain 972 / ATCC 24843) (Fission yeast).